The chain runs to 219 residues: Sugar transporter SWEET1 (219 aa).

Transmembrane regions (helical) follow at residues 3-23 (FLQL…TTGL), 38-58 (VQFL…YYGL), 63-83 (GTVI…IATY), 98-118 (LLMV…ISPG), 125-145 (LGLT…ADLL), 156-176 (LSFS…LYGL), and 189-209 (PGIF…AVIP). In terms of domain architecture, MtN3/slv 1 spans 5–90 (QLLSCACIIF…ATYCHYTKEK (86 aa)). Positions 124-204 (QLGLTCSVFT…LIRFFLFWWF (81 aa)) constitute a MtN3/slv 2 domain.

The protein belongs to the SWEET sugar transporter family.

The protein resides in the golgi apparatus membrane. It is found in the cell membrane. Functionally, mediates sugar transport across membranes. In Danio rerio (Zebrafish), this protein is Sugar transporter SWEET1 (slc50a1).